Here is an 803-residue protein sequence, read N- to C-terminus: Dynein axonemal intermediate chain 4 (803 aa).

Over residues 1–33 (MPSSPTSTRKQTNFTASVSAQSRKSISFGNPKS) the composition is skewed to polar residues. Disordered stretches follow at residues 1-41 (MPSS…GYAG), 88-109 (LYHPDPHAMPTKPSKLLTSQEG), and 143-163 (STVSKSSISTTESMTEDLEDP). Over residues 143–155 (STVSKSSISTTES) the composition is skewed to low complexity. WD repeat units follow at residues 492–532 (QSPY…NTPV), 541–589 (KHLG…DCHD), 616–656 (SRQA…QYLE), 660–700 (GHKG…PFFT), 703–742 (PTTYVVYDVAWSPKSAYIFAAANENRVEIWDLQISTLDPL), and 748–787 (NPGIKFTTVLFAKQTDCLLVGDSDGQVAVYELRNMPTPTE).

As to quaternary structure, part of the multisubunit axonemal dynein complex formed at least of two heavy chains and a number of intermediate and light chains. Associated with axonemal dynein subunits such as, DNAH2, DNAI3, and DYNLT1. Interacts with DYNLT1.

The protein resides in the cytoplasm. It is found in the cytoskeleton. Its subcellular location is the flagellum axoneme. It localises to the cilium axoneme. The protein localises to the dynein axonemal particle. Functionally, plays a critical role in the assembly of axonemal dynein complex, thereby playing a role in ciliary motility. The protein is Dynein axonemal intermediate chain 4 of Rattus norvegicus (Rat).